A 738-amino-acid chain; its full sequence is YTH domain-containing protein 1 (738 aa).

The segment covering 1–12 (MAADSREEKDGE) has biased composition (basic and acidic residues). The segment at 1-341 (MAADSREEKD…KHEKLSSSVR (341 aa)) is disordered. At Ser-35 the chain carries Phosphoserine. Residues 50 to 59 (ERMESIDTKR) are compositionally biased toward basic and acidic residues. Polar residues predominate over residues 63 to 90 (SIHSRQLISKPLSSSVSNNKRIVSTKGK). Over residues 91–115 (SVTEYKNEEYQRSERNKRLDADRKI) the composition is skewed to basic and acidic residues. Residue Lys-96 forms a Glycyl lysine isopeptide (Lys-Gly) (interchain with G-Cter in SUMO2) linkage. 2 positions are modified to phosphoserine: Ser-118 and Ser-120. The span at 124-144 (EPYKSQPEKPCLRKRDSERRA) shows a compositional bias: basic and acidic residues. At Ser-146 the chain carries Phosphoserine. At Thr-148 the chain carries Phosphothreonine. 2 stretches are compositionally biased toward basic and acidic residues: residues 151–163 (GSER…DRRA) and 170–185 (SKEE…DHET). Polar residues predominate over residues 186–197 (GSSASSEQGNNT). A compositionally biased stretch (acidic residues) spans 198–257 (ENEEEGGEEDVEEDEEVDEDGDDDEEVDEDAEEEEDEEEDEEEEDEEEEEEEEEEYEQDE). The span at 258–273 (RDQKEEGNDYDTRSEA) shows a compositional bias: basic and acidic residues. Residues 283 to 292 (FTDGSVRSGS) show a composition bias toward polar residues. Ser-311, Ser-318, Ser-320, Ser-321, and Ser-323 each carry phosphoserine. Over residues 318-328 (SGSSASESYAG) the composition is skewed to low complexity. The region spanning 358–495 (ARFFLIKSNN…ECGTQLCLLF (138 aa)) is the YTH domain. RNA contacts are provided by residues 364-366 (KSN) and Trp-380. Ser-427 is modified (phosphoserine). Residue Trp-431 participates in RNA binding. A Phosphoserine modification is found at Ser-438. RNA is bound at residue Asp-479. The span at 512-526 (HKRRMHSQPRSRGRP) shows a compositional bias: basic residues. Disordered stretches follow at residues 512–566 (HKRR…RPGY), 618–654 (GMPP…HPVP), and 680–738 (AVVS…RYRR). Over residues 527–566 (SRREPVRDVGRRRPEDYDIHNSRKKPRIDYPPEFHQRPGY) the composition is skewed to basic and acidic residues. Ser-548 carries the post-translational modification Phosphoserine. Residues 690 to 738 (RERDRERERDRPRDNRRDRERDRGRDRERERERICDRDRDRGERGRYRR) are compositionally biased toward basic and acidic residues.

In terms of assembly, interacts with SRSF1. Interacts with SRSF2. Interacts with SRSF3. Interacts with SRSF7. Interacts with SRSF10. Interacts with CPSF6. Interacts with KHDRBS1/SAM68. Interacts with TRA2B. Interacts with KHDRBS3. Interacts with EMD. Interacts with RBMX. Interacts with ZCCHC8. In terms of processing, tyrosine phosphorylated. As to expression, ubiquitous.

The protein localises to the nucleus. It localises to the nucleus speckle. Regulator of alternative splicing that specifically recognizes and binds N6-methyladenosine (m6A)-containing RNAs. M6A is a modification present at internal sites of mRNAs and some non-coding RNAs and plays a role in the efficiency of mRNA splicing, processing and stability. Acts as a key regulator of exon-inclusion or exon-skipping during alternative splicing via interaction with mRNA splicing factors SRSF3 and SRSF10. Specifically binds m6A-containing mRNAs and promotes recruitment of SRSF3 to its mRNA-binding elements adjacent to m6A sites, leading to exon-inclusion during alternative splicing. In contrast, interaction with SRSF3 prevents interaction with SRSF10, a splicing factor that promotes exon skipping: this prevents SRSF10 from binding to its mRNA-binding sites close to m6A-containing regions, leading to inhibit exon skipping during alternative splicing. May also regulate alternative splice site selection. Also involved in nuclear export of m6A-containing mRNAs via interaction with SRSF3: interaction with SRSF3 facilitates m6A-containing mRNA-binding to both SRSF3 and NXF1, promoting mRNA nuclear export. Involved in S-adenosyl-L-methionine homeostasis by regulating expression of MAT2A transcripts, probably by binding m6A-containing MAT2A mRNAs. Also recognizes and binds m6A on other RNA molecules. Involved in random X inactivation mediated by Xist RNA: recognizes and binds m6A-containing Xist and promotes transcription repression activity of Xist. Also recognizes and binds m6A-containing single-stranded DNA. Involved in germline development: required for spermatogonial development in males and oocyte growth and maturation in females, probably via its role in alternative splicing. The polypeptide is YTH domain-containing protein 1 (Ythdc1) (Rattus norvegicus (Rat)).